Reading from the N-terminus, the 282-residue chain is 3-oxoadipate CoA-transferase subunit A (282 aa).

Belongs to the 3-oxoacid CoA-transferase subunit A family. Heterotetramer composed of 2 A and 2 B subunits.

The catalysed reaction is 3-oxoadipate + succinyl-CoA = 3-oxoadipyl-CoA + succinate. It functions in the pathway aromatic compound metabolism; beta-ketoadipate pathway; acetyl-CoA and succinyl-CoA from 3-oxoadipate: step 1/2. In terms of biological role, catalyzes the CoA transfer from succinate to 3-oxoadipate (beta-ketoadipate). The chain is 3-oxoadipate CoA-transferase subunit A (catI) from Pseudomonas knackmussii (strain DSM 6978 / CCUG 54928 / LMG 23759 / B13).